The primary structure comprises 479 residues: Flavonol 3-O-glucosyltransferase UGT71C4 (479 aa).

The Proton acceptor role is filled by His-17. His-17 contacts an anthocyanidin. Asp-127 serves as the catalytic Charge relay. UDP-alpha-D-glucose-binding residues include Thr-150, Ala-350, Gln-352, His-367, Trp-370, Asn-371, Ser-372, and Glu-375. Ala-390 serves as a coordination point for an anthocyanidin. UDP-alpha-D-glucose contacts are provided by Glu-391 and Gln-392.

Belongs to the UDP-glycosyltransferase family.

It catalyses the reaction a flavonol + UDP-alpha-D-glucose = a flavonol 3-O-beta-D-glucoside + UDP + H(+). The enzyme catalyses a 7-O-hydroxy-flavonol + UDP-alpha-D-glucose = a flavonol 7-O-beta-D-glucoside + UDP + H(+). Its function is as follows. Possesses quercetin 3-O-glucosyltransferase and 7-O-glucosyltransferase activities in vitro. Also active in vitro on benzoates and benzoate derivatives. The protein is Flavonol 3-O-glucosyltransferase UGT71C4 of Arabidopsis thaliana (Mouse-ear cress).